The sequence spans 71 residues: Brevinin-1E (71 aa).

A signal peptide spans 1–22 (MFTLKKSMLLLFFLGTINLSLC). The propeptide occupies 23 to 45 (EEERDADEEERRDNPDESEVEVE). C65 and C71 are oxidised to a cystine.

Belongs to the frog skin active peptide (FSAP) family. Brevinin subfamily. In terms of tissue distribution, expressed by the skin glands.

Its subcellular location is the secreted. Shows antibacterial activity against representative Gram-negative and Gram-positive bacterial species, and a very high hemolytic activity. The protein is Brevinin-1E of Pelophylax lessonae (Pool frog).